The primary structure comprises 650 residues: Growth hormone receptor (650 aa).

The N-terminal stretch at 1–24 (MDLCQVFLTLALAVTSSTFSGSEA) is a signal peptide. The Extracellular portion of the chain corresponds to 25 to 273 (TPATLGKASP…ILEACEEDIQ (249 aa)). 2 cysteine pairs are disulfide-bonded: Cys-56-Cys-66 and Cys-109-Cys-120. The N-linked (GlcNAc...) asparagine glycan is linked to Asn-123. Cysteines 134 and 148 form a disulfide. The Fibronectin type-III domain occupies 159–262 (PPIGLNWTLL…EVLRVIFPQT (104 aa)). N-linked (GlcNAc...) asparagine glycosylation is found at Asn-164, Asn-169, and Asn-208. The WSXWS motif signature appears at 248 to 252 (YSEFS). A helical transmembrane segment spans residues 274–297 (FPWFLIIIFGIFGVAVMLFVVIFS). Residues 298 to 650 (KQQRIKMLIL…STDQLNKIMQ (353 aa)) lie on the Cytoplasmic side of the membrane. The required for JAK2 binding stretch occupies residues 303 to 390 (KMLILPPVPV…HEKSAGILGA (88 aa)). Residues 306–314 (ILPPVPVPK) carry the Box 1 motif motif. Residues 349-358 (DSWVEFIELD) carry the UbE motif motif. Phosphoserine is present on Ser-350. A disordered region spans residues 466-486 (KPQPLLSSETEATHQLASTPM). The span at 470-486 (LLSSETEATHQLASTPM) shows a compositional bias: polar residues. Phosphotyrosine is present on residues Tyr-498 and Tyr-606.

The protein belongs to the type I cytokine receptor family. Type 1 subfamily. In terms of assembly, on growth hormone (GH) binding, forms homodimers and binds JAK2 via a box 1-containing domain. The soluble form (GHBP) is produced by phorbol ester-promoted proteolytic cleavage at the cell surface (shedding) by ADAM17/TACE. Shedding is inhibited by growth hormone (GH) binding to the receptor probably due to a conformational change in GHR rendering the receptor inaccessible to ADAM17. Post-translationally, on GH binding, phosphorylated on tyrosine residues in the cytoplasmic domain by JAK2. In terms of processing, ubiquitinated by the ECS(SOCS2) complex following ligand-binding and phosphorylation by JAK2, leading to its degradation by the proteasome. Regulation by the ECS(SOCS2) complex acts as a negative feedback loop of growth hormone receptor signaling. Ubiquitination is not sufficient for GHR internalization. As to expression, expressed in all tissues tested including, liver, heart, adipose tissue, mammary gland, testes, ovary, brain, kidney and muscle. Highest levels in liver.

Its subcellular location is the cell membrane. It localises to the secreted. Functionally, receptor for pituitary gland growth hormone (GH1) involved in regulating postnatal body growth. On ligand binding, couples to the JAK2/STAT5 pathway. The soluble form (GHBP) acts as a reservoir of growth hormone in plasma and may be a modulator/inhibitor of GH signaling. The sequence is that of Growth hormone receptor (Ghr) from Mus musculus (Mouse).